The following is an 83-amino-acid chain: Alpha-elapitoxin-Ppr1 (83 aa).

Positions 1 to 21 are cleaved as a signal peptide; sequence MKTLLLTLVVVTIVCLDLGYT. 4 disulfide bridges follow: Cys24–Cys45, Cys38–Cys62, Cys64–Cys75, and Cys76–Cys81.

Belongs to the three-finger toxin family. Short-chain subfamily. Type I alpha-neurotoxin sub-subfamily. As to expression, expressed by the venom gland.

It is found in the secreted. Its function is as follows. Bird-specific neurotoxin (tested on chicken) that acts as a pseudo-irreversible antagonist at the nicotinic acetylcholine receptor (nAChR) of the skeletal neuromuscular junction. Has no significant effect on the electrically-induced twitches of the rat isolated phrenic nerve-diaphragm preparation. This is Alpha-elapitoxin-Ppr1 from Pseudechis porphyriacus (Red-bellied black snake).